The primary structure comprises 148 residues: Large ribosomal subunit protein bL9 (148 aa).

Belongs to the bacterial ribosomal protein bL9 family.

Its function is as follows. Binds to the 23S rRNA. This is Large ribosomal subunit protein bL9 from Methylococcus capsulatus (strain ATCC 33009 / NCIMB 11132 / Bath).